The following is a 557-amino-acid chain: Formate--tetrahydrofolate ligase (557 aa).

66–73 (TPAGEGKS) provides a ligand contact to ATP.

It belongs to the formate--tetrahydrofolate ligase family.

It catalyses the reaction (6S)-5,6,7,8-tetrahydrofolate + formate + ATP = (6R)-10-formyltetrahydrofolate + ADP + phosphate. It functions in the pathway one-carbon metabolism; tetrahydrofolate interconversion. This Lactobacillus johnsonii (strain CNCM I-12250 / La1 / NCC 533) protein is Formate--tetrahydrofolate ligase.